Reading from the N-terminus, the 988-residue chain is Ephrin type-B receptor 3 (988 aa).

Positions 1-24 (GVSSRARRPPGSSRSSRRGVTSEL) are disordered. Residues 1–534 (GVSSRARRPP…TSKTFQELPL (534 aa)) lie on the Extracellular side of the membrane. The Eph LBD domain maps to 11–189 (GSSRSSRRGV…FYKKCSNTIA (179 aa)). Residues cysteine 53 and cysteine 171 are joined by a disulfide bond. 2 consecutive Fibronectin type-III domains span residues 311 to 424 (VPSA…TNQA) and 425 to 522 (APSA…TAED). N-linked (GlcNAc...) asparagine glycosylation is found at asparagine 323 and asparagine 418. Residues 535–555 (IVGSATAGLLFVIVVVIIAIV) traverse the membrane as a helical segment. The Cytoplasmic portion of the chain corresponds to 556–988 (CFRKGMVTEQ…QMNQTLPVQV (433 aa)). Phosphotyrosine; by autocatalysis is present on tyrosine 604. A Protein kinase domain is found at 623-886 (VKIEEVIGAG…QIVNTLDKLI (264 aa)). ATP contacts are provided by residues 629 to 637 (IGAGEFGEV) and lysine 655. Aspartate 748 (proton acceptor) is an active-site residue. Positions 915 to 979 (TTFTTVGDWL…LSSIQDMRLQ (65 aa)) constitute an SAM domain. The PDZ-binding signature appears at 986–988 (VQV).

It belongs to the protein kinase superfamily. Tyr protein kinase family. Ephrin receptor subfamily. Heterotetramer upon binding of the ligand. The heterotetramer is composed of an ephrin dimer and a receptor dimer. Oligomerization is probably required to induce biological responses. Phosphorylated. Autophosphorylates upon ligand-binding. Autophosphorylation on Tyr-604 is required for interaction with SH2 domain-containing proteins. As to expression, present in 10-day embryonic brain and body tissues. Prominent expression in kidney. Lower expression in lung, and barely detectable in brain, liver, heart, skeletal muscle and thymus.

It is found in the cell membrane. The protein resides in the cell projection. Its subcellular location is the dendrite. It carries out the reaction L-tyrosyl-[protein] + ATP = O-phospho-L-tyrosyl-[protein] + ADP + H(+). Receptor tyrosine kinase which binds promiscuously transmembrane ephrin-B family ligands residing on adjacent cells, leading to contact-dependent bidirectional signaling into neighboring cells. The signaling pathway downstream of the receptor is referred to as forward signaling while the signaling pathway downstream of the ephrin ligand is referred to as reverse signaling. Generally has an overlapping and redundant function with EPHB2. Like EPHB2, functions in axon guidance during development. In addition to its role in axon guidance also plays an important redundant role with other ephrin-B receptors in development and maturation of dendritic spines and the formation of excitatory synapses. May control other aspects of development through regulation of cell migration and positioning. The polypeptide is Ephrin type-B receptor 3 (EPHB3) (Gallus gallus (Chicken)).